Here is a 1035-residue protein sequence, read N- to C-terminus: Translation initiation factor IF-2 (1035 aa).

A compositionally biased stretch (basic and acidic residues) spans 56–66; it reads KDDKSNTDDNK. Disordered regions lie at residues 56–80 and 114–402; these read KDDK…SSEA and ANDA…VIKN. Residues 68–78 are compositionally biased toward polar residues; the sequence is ASAHSVAQHSS. Basic and acidic residues-rich tracts occupy residues 114-137 and 146-200; these read ANDA…RVET and LVRE…EIKD. The segment covering 219-228 has biased composition (polar residues); sequence DSATNVNLNE. Residues 229–238 show a composition bias toward basic and acidic residues; it reads SIDKDKKTND. The segment covering 239–253 has biased composition (polar residues); sequence NRQVSTDNSAVNNEE. Positions 259 to 315 are enriched in basic and acidic residues; sequence LNKKDMDKKNNNKKNEAKKNAEKKNEAKKNEKNDNKGGNAKKNEHRSPDMKKNDSNR. The segment covering 316-325 has biased composition (polar residues); the sequence is PQDANKQNSK. Composition is skewed to basic and acidic residues over residues 327 to 347 and 354 to 385; these read AADK…EIPK and QKEE…KEQP. The region spanning 537 to 706 is the tr-type G domain; the sequence is PRPPVVVVMG…LLAADMLELK (170 aa). The G1 stretch occupies residues 546–553; sequence GHVDHGKT. Residue 546–553 participates in GTP binding; it reads GHVDHGKT. The segment at 571 to 575 is G2; the sequence is GITQH. The segment at 592-595 is G3; sequence DTPG. GTP is bound by residues 592–596 and 646–649; these read DTPGH and NKID. A G4 region spans residues 646–649; sequence NKID. Residues 682-684 are G5; that stretch reads SAK.

The protein belongs to the TRAFAC class translation factor GTPase superfamily. Classic translation factor GTPase family. IF-2 subfamily.

Its subcellular location is the cytoplasm. One of the essential components for the initiation of protein synthesis. Protects formylmethionyl-tRNA from spontaneous hydrolysis and promotes its binding to the 30S ribosomal subunits. Also involved in the hydrolysis of GTP during the formation of the 70S ribosomal complex. The chain is Translation initiation factor IF-2 from Acetivibrio thermocellus (strain ATCC 27405 / DSM 1237 / JCM 9322 / NBRC 103400 / NCIMB 10682 / NRRL B-4536 / VPI 7372) (Clostridium thermocellum).